The chain runs to 216 residues: uncharacterized protein (216 aa).

This is an uncharacterized protein from Treponema pallidum (strain Nichols).